The chain runs to 54 residues: Lectin alpha chain (54 aa).

This sequence belongs to the leguminous lectin family. Tetramer of two alpha and two beta chains.

In Lathyrus odoratus (Sweet pea), this protein is Lectin alpha chain.